The primary structure comprises 263 residues: MNHISKINPKKELSQCFISSTHITDQIVNYAGNISDYSIIEIGPGLGTMTYSILNKNPKKLISIEKDRRLSTIHEKIVEEFQGKYEFILSDALNIDLRDIIEPPVKVIANLPYHIATTLLIKWMDYINFFTSFTLMFQKEVADRIVAQPNNKNYGTLSILIQLLSNVYKMEDFGPEIFSPQPKVMSSVINIIALPEPRFHVNYRKLSQVLKTTFSERRKMIRSTLKKLTNNADEMLESLNIDNNLRPENLSIEQFCQITNCIN.

Ile18, Gly43, Glu65, Asp91, and Asn110 together coordinate S-adenosyl-L-methionine.

This sequence belongs to the class I-like SAM-binding methyltransferase superfamily. rRNA adenine N(6)-methyltransferase family. RsmA subfamily.

It localises to the cytoplasm. The catalysed reaction is adenosine(1518)/adenosine(1519) in 16S rRNA + 4 S-adenosyl-L-methionine = N(6)-dimethyladenosine(1518)/N(6)-dimethyladenosine(1519) in 16S rRNA + 4 S-adenosyl-L-homocysteine + 4 H(+). In terms of biological role, specifically dimethylates two adjacent adenosines (A1518 and A1519) in the loop of a conserved hairpin near the 3'-end of 16S rRNA in the 30S particle. May play a critical role in biogenesis of 30S subunits. This chain is Ribosomal RNA small subunit methyltransferase A, found in Ehrlichia chaffeensis (strain ATCC CRL-10679 / Arkansas).